Consider the following 174-residue polypeptide: Calcineurin subunit B (174 aa).

4 EF-hand domains span residues 21-56 (EEIERIRKRFIKIDANQSGSIDRNEFLSIPSVASNP), 60-88 (RLFSVVDEDGGGDVDFQEFINSLSVFSVH), 90-125 (NKEEKLKFAFKIYDIDRDGYISNGELYLVLKMMVGT), and 131-166 (QLQQIVDKTIMEVDKDRDGKISFEEFKDIVSGSNVT). Positions 34, 36, 38, 40, 45, 66, 68, 72, 77, 103, 105, 107, 109, 114, 144, 146, 148, 150, and 155 each coordinate Ca(2+).

The protein belongs to the calcineurin regulatory subunit family. As to quaternary structure, composed of a catalytic subunit (A) and a regulatory subunit (B).

Regulatory subunit of calcineurin, a calcium-dependent, calmodulin stimulated protein phosphatase. Confers calcium sensitivity. This Schizosaccharomyces pombe (strain 972 / ATCC 24843) (Fission yeast) protein is Calcineurin subunit B (cnb1).